Here is a 362-residue protein sequence, read N- to C-terminus: Phosphoserine aminotransferase (362 aa).

Residues S9 and R42 each coordinate L-glutamate. Pyridoxal 5'-phosphate-binding positions include 76–77, W102, T153, D174, and Q197; that span reads GR. At K198 the chain carries N6-(pyridoxal phosphate)lysine. Residue 239-240 participates in pyridoxal 5'-phosphate binding; that stretch reads NT.

This sequence belongs to the class-V pyridoxal-phosphate-dependent aminotransferase family. SerC subfamily. As to quaternary structure, homodimer. Requires pyridoxal 5'-phosphate as cofactor.

The protein localises to the cytoplasm. It carries out the reaction O-phospho-L-serine + 2-oxoglutarate = 3-phosphooxypyruvate + L-glutamate. The catalysed reaction is 4-(phosphooxy)-L-threonine + 2-oxoglutarate = (R)-3-hydroxy-2-oxo-4-phosphooxybutanoate + L-glutamate. Its pathway is amino-acid biosynthesis; L-serine biosynthesis; L-serine from 3-phospho-D-glycerate: step 2/3. The protein operates within cofactor biosynthesis; pyridoxine 5'-phosphate biosynthesis; pyridoxine 5'-phosphate from D-erythrose 4-phosphate: step 3/5. Catalyzes the reversible conversion of 3-phosphohydroxypyruvate to phosphoserine and of 3-hydroxy-2-oxo-4-phosphonooxybutanoate to phosphohydroxythreonine. The polypeptide is Phosphoserine aminotransferase (Escherichia coli O139:H28 (strain E24377A / ETEC)).